A 402-amino-acid chain; its full sequence is UDP-glucose 6-dehydrogenase (402 aa).

NAD(+)-binding positions include 2 to 19 (KIAV…GVLL), V11, D29, K34, T83, T118, and E145. Substrate contacts are provided by residues 141 to 145 (EFLRE), K204, N208, 249 to 253 (YNNPS), and G257. Y259 lines the NAD(+) pocket. The active-site Nucleophile is the C260. Residue K263 participates in NAD(+) binding. K320 contributes to the substrate binding site. Position 327 (R327) interacts with NAD(+).

Belongs to the UDP-glucose/GDP-mannose dehydrogenase family.

It catalyses the reaction UDP-alpha-D-glucose + 2 NAD(+) + H2O = UDP-alpha-D-glucuronate + 2 NADH + 3 H(+). The protein operates within nucleotide-sugar biosynthesis; UDP-alpha-D-glucuronate biosynthesis; UDP-alpha-D-glucuronate from UDP-alpha-D-glucose: step 1/1. In terms of biological role, catalyzes the formation of UDP-glucuronic acid which is required for capsular hyaluronic acid synthesis. The protein is UDP-glucose 6-dehydrogenase (hasB) of Streptococcus pyogenes serotype M3 (strain ATCC BAA-595 / MGAS315).